Reading from the N-terminus, the 330-residue chain is Serine/threonine-protein phosphatase PP1-alpha catalytic subunit (330 aa).

N-acetylserine is present on Ser2. Phosphoserine occurs at positions 2 and 22. Asp64, His66, Asp92, and Asn124 together coordinate Mn(2+). His125 acts as the Proton donor in catalysis. Mn(2+) is bound by residues His173 and His248. Lys305 is modified (N6-acetyllysine). A Phosphotyrosine modification is found at Tyr306. Residues 306 to 330 (YGQFSGLNPGGRPITPPRNSAKAKK) form a disordered region. Thr320 carries the phosphothreonine modification. A Phosphoserine modification is found at Ser325.

It belongs to the PPP phosphatase family. PP-1 subfamily. As to quaternary structure, PP1 comprises a catalytic subunit, PPP1CA, PPP1CB or PPP1CC, which is folded into its native form by inhibitor 2 and glycogen synthetase kinase 3, and then complexed to one or several targeting or regulatory subunits. PPP1R12A, PPP1R12B and PPP1R12C mediate binding to myosin. PPP1R3A (in skeletal muscle), PPP1R3B (in liver), PPP1R3C, PPP1R3D and PPP1R3F (in brain) mediate binding to glycogen. Interacts with PPP1R39. Interacts with BTBD10. Interacts with KCTD20. Interacts with PPP1R9A and PPP1R9B. Part of a complex containing PPP1R15B, PP1 and NCK1/2. Interacts with PHACTR4; which acts as an activator of PP1 activity. Interacts with PPP1R15A and PPP1R15B; the interactions mediate binding to EIF2S1. Interacts with PPP1R7. Interacts with YLPM1. Forms a complex with ILF2, ILF3, YLPM1, KHDRBS1, RBMX and NCOA5. Interacts with NOM1 and PPP1R8. Interacts with PPP1R16B. Interacts with RPSA only in the presence of PPP1R16B. Component of the PNUTS-PP1 phosphatase complex, composed of PPP1R10/PNUTS, TOX4, WDR82, and PPP1CA or PPP1CB or PPP1CC. Interacts with PPP1R10/PNUTS and PPP1R8. Interacts with WDR82 in the presence of PPP1R10/PNUTS. Interacts with TRIM28; the interaction dephosphorylates TRIM28 on 'Ser-824' and forms a complex at the p21 promoter site. Interacts with isoform 1 and isoform 4 of NEK2. Interacts with FER; this promotes phosphorylation at Thr-320. Interacts with DAB2; the interaction is mutually exclusive with the AXIN1:PPP1CA interaction. Interacts with FOXP3. Interacts with CENPA. Interacts with ATG16L1. Found in a complex with PPP1CA, PPP1CC, SHC1 and PEAK1. Interacts with tensin TNS1. Interacts with SAXO4, PPP1R21, PPP1R26, PPP1R27, PPP1R35, PPP1R36, PPP1R37, SH3RF2, ELFN1 and ELFN2. Interacts with TPRN; the interaction results in inhibition of PPC1A phosphatase activity. Interacts with SKA1 (via C-terminus); the interaction is direct and required for the recruitment of PP1 to the kinetochore. Interacts with the KNL1 complex subunit KNL1; the interaction is direct and mutually exclusive with KNL1 binding to microtubules. Component of the SHOC2-MRAS-PP1c (SMP) complex consisting of SHOC2, GTP-bound M-Ras/MRAS and the catalytic subunit of protein phosphatase 1 (either PPP1CA, PPP1CB or PPP1CC). SHOC2 and PP1c preferably bind M-Ras/MRAS, but they also bind K-Ras/KRAS, N-Ras/NRAS and H-Ras/HRAS; these interactions are GTP-dependent and both SHOC2 and PP1c are required to form a stable complex. Interacts with SHOC2 in the absence of Ras GTPases. In terms of assembly, (Microbial infection) Interacts with HHV-1 ICP34.5. (Microbial infection) Interacts with Venezuelan equine encephalitis virus (VEEV) capsid protein; this interaction dephosphorylates the capsid protein, which increases its ability to bind to the viral genome. Requires Fe cation as cofactor. Mn(2+) serves as cofactor. Post-translationally, phosphorylated. Dephosphorylated at Thr-320 in the presence of ionizing radiation.

It localises to the cytoplasm. The protein localises to the nucleus. Its subcellular location is the nucleoplasm. The protein resides in the nucleolus. The enzyme catalyses O-phospho-L-seryl-[protein] + H2O = L-seryl-[protein] + phosphate. The catalysed reaction is O-phospho-L-threonyl-[protein] + H2O = L-threonyl-[protein] + phosphate. With respect to regulation, the phosphatase activity of the PPP1R15A-PP1 complex toward EIF2S1 is specifically inhibited by Salubrinal, a drug that protects cells from endoplasmic reticulum stress. Protein phosphatase that associates with over 200 regulatory proteins to form highly specific holoenzymes which dephosphorylate hundreds of biological targets. Protein phosphatase 1 (PP1) is essential for cell division, transcription elongation, and participates in the regulation of glycogen metabolism, muscle contractility and protein synthesis. Involved in regulation of ionic conductances and long-term synaptic plasticity. May play an important role in dephosphorylating substrates such as the postsynaptic density-associated Ca(2+)/calmodulin dependent protein kinase II. Catalytic component of the PNUTS-PP1 protein phosphatase complex, a protein phosphatase 1 (PP1) complex that promotes RNA polymerase II transcription pause-release, allowing transcription elongation: the PNUTS-PP1 complex mediates the release of RNA polymerase II from promoter-proximal region of genes by catalyzing dephosphorylation of proteins involved in transcription, such as AFF4, CDK9, MEPCE, INTS12, NCBP1, POLR2M/GDOWN1 and SUPT6H. The PNUTS-PP1 complex also regulates transcription termination by mediating dephosphorylation of SUPT5H in termination zones downstream of poly(A) sites, thereby promoting deceleration of RNA polymerase II transcription. PNUTS-PP1 complex is also involved in the response to replication stress by mediating dephosphorylation of POLR2A at 'Ser-5' of the CTD, promoting RNA polymerase II degradation. PNUTS-PP1 also plays a role in the control of chromatin structure and cell cycle progression during the transition from mitosis into interphase. Regulates NEK2 function in terms of kinase activity and centrosome number and splitting, both in the presence and absence of radiation-induced DNA damage. Regulator of neural tube and optic fissure closure, and enteric neural crest cell (ENCCs) migration during development. In balance with CSNK1D and CSNK1E, determines the circadian period length, through the regulation of the speed and rhythmicity of PER1 and PER2 phosphorylation. May dephosphorylate CSNK1D and CSNK1E. Dephosphorylates the 'Ser-418' residue of FOXP3 in regulatory T-cells (Treg) from patients with rheumatoid arthritis, thereby inactivating FOXP3 and rendering Treg cells functionally defective. Dephosphorylates CENPA. Dephosphorylates the 'Ser-139' residue of ATG16L1 causing dissociation of ATG12-ATG5-ATG16L1 complex, thereby inhibiting autophagy. Together with PPP1CC (PP1-gamma subunit), dephosphorylates IFIH1/MDA5 and RIG-I leading to their activation and a functional innate immune response. Core component of the SHOC2-MRAS-PP1c (SMP) holophosphatase complex that regulates the MAPK pathway activation. The SMP complex specifically dephosphorylates the inhibitory phosphorylation at 'Ser-259' of RAF1 kinase, 'Ser-365' of BRAF kinase and 'Ser-214' of ARAF kinase, stimulating their kinase activities. The SMP complex enhances the dephosphorylation activity and substrate specificity of PP1c. In terms of biological role, (Microbial infection) Necessary for alphaviruses replication. This Homo sapiens (Human) protein is Serine/threonine-protein phosphatase PP1-alpha catalytic subunit (PPP1CA).